The following is a 268-amino-acid chain: MEESAGATSAQSAATSVSESPAEETILVCASEPVTVDGGRLLVCRSPGPEGFYKVPLGLKVALPTGYAMLVAQRGGGRTTNGIVDAGFRGEVQAIVAPGRPRAQFYCTPLRLAPGIATDVPFFEVFAPKRDEDAGYDIPCPRELVLPPGGAETVTLPVHRTDGRHWAYVFGRSSLNLRGIVVFPTPWESGPCRFRIQNRGAHPVTLESGQRVAQLVLTREPLGWITGRSPFPATPRAPMQHRPAWLFARDFVAPSSARGARGFGSTGL.

Residues 172-174 and 263-264 contribute to the substrate site; these read RSS and FG.

Belongs to the dUTPase family. It depends on Mg(2+) as a cofactor.

The catalysed reaction is dUTP + H2O = dUMP + diphosphate + H(+). Its function is as follows. Involved in nucleotide metabolism: produces dUMP, the immediate precursor of thymidine nucleotides and decreases the intracellular concentration of dUTP to avoid uracil incorporation into viral DNA. The polypeptide is Deoxyuridine 5'-triphosphate nucleotidohydrolase (Suid herpesvirus 1 (strain Kaplan) (SuHV-1)).